We begin with the raw amino-acid sequence, 70 residues long: Turripeptide Ici9.2 (70 aa).

The N-terminal stretch at 1–20 is a signal peptide; it reads MKVYCLLLVLLVGLVSQAQG. The 50-residue stretch at 21–70 folds into the Kazal-like domain; it reads QLDKKCQTMCTMEYLPVCGSDGTTYPNKCTLTSTACVNQMDITVLHNGEC. Intrachain disulfides connect C26-C56, C30-C49, and C38-C70.

It belongs to the conopeptide P-like superfamily. As to expression, expressed by the venom duct.

The protein resides in the secreted. In terms of biological role, acts as a neurotoxin by inhibiting an ion channel. May also act as a serine protease inhibitor, since it possess the kazal serine protease inhibitor signature. In Iotyrris cingulifera (Sea snail), this protein is Turripeptide Ici9.2.